The following is a 527-amino-acid chain: Outer capsid protein VP5 (527 aa).

An involved in membrane permeabilization region spans residues methionine 1–aspartate 42.

The protein belongs to the orbivirus VP5 family.

Its subcellular location is the virion. Its function is as follows. VP5 protein is one of the two proteins (with VP2) which constitute the virus particle outer capsid. Acts as a membrane permeabilization protein that mediates release of viral particles from endosomal compartments into the cytoplasm. Permeabilization activity is probably negatively regulated by VP2 and is triggered by endosomal degradation of VP2 and exposure to low pH. This chain is Outer capsid protein VP5 (Segment-6), found in Antilocapra americana (Pronghorn).